A 745-amino-acid polypeptide reads, in one-letter code: Kinesin-like protein KIN-14M (745 aa).

A disordered region spans residues 1-31 (MVGEMTNNGRIRPSFPVKDLTSNEGSEYGGP). Residues 1-35 (MVGEMTNNGRIRPSFPVKDLTSNEGSEYGGPVEFT) are globular. 2 microtubule-binding regions span residues 65-77 (YVKR…RWFQ) and 198-745 (SLQL…LSLG). Coiled coils occupy residues 76-223 (FQEL…GEKE) and 259-389 (KDEL…GNIR). Residues 387-724 (NIRVFCRVRP…LRFAARVNAC (338 aa)) enclose the Kinesin motor domain. 472 to 479 (GQTGSGKT) is a binding site for ATP.

It belongs to the TRAFAC class myosin-kinesin ATPase superfamily. Kinesin family. KIN-14 subfamily. As to quaternary structure, bind to microtubules in an ATP-insensitive manner (in vitro). Homodimer and heterodimer with KIN14N/KATC (in vitro).

The protein resides in the cytoplasm. It is found in the cytoskeleton. This is Kinesin-like protein KIN-14M from Arabidopsis thaliana (Mouse-ear cress).